Consider the following 2224-residue polypeptide: Coagulation factor V (2224 aa).

The N-terminal stretch at 1–28 is a signal peptide; that stretch reads MFPGCPRLWVLVVLGTSWVGWGSQGTEA. 4 consecutive Plastocyanin-like domains span residues 30 to 193, 203 to 329, 348 to 526, and 536 to 684; these read QLRQ…LLIC, TQKT…IKNC, KRWE…LLIC, and IQRA…DVKC. F5/8 type A domains follow at residues 30-329 and 348-684; these read QLRQ…IKNC and KRWE…DVKC. Residues Asn-51 and Asn-55 are each glycosylated (N-linked (GlcNAc...) asparagine). Ca(2+) is bound by residues Asp-139 and Asp-140. A disulfide bridge connects residues Cys-167 and Cys-193. N-linked (GlcNAc...) asparagine glycans are attached at residues Asn-239, Asn-297, Asn-382, Asn-460, and Asn-468. Residues Cys-248 and Cys-329 are joined by a disulfide bond. An intrachain disulfide couples Cys-500 to Cys-526. A glycan (N-linked (GlcNAc...) asparagine) is linked at Asn-554. A disulfide bridge links Cys-603 with Cys-684. Residue Thr-640 is modified to Phosphothreonine. Residues 692 to 1573 are b; it reads SYEIFEPPES…PDNIAAWYLR (882 aa). Sulfotyrosine occurs at positions 693, 724, and 726. A propeptide spans 738–1573 (activation peptide (connecting region)); that stretch reads SFRNSSLNQE…PDNIAAWYLR (836 aa). Asn-741, Asn-752, Asn-760, Asn-776, and Asn-782 each carry an N-linked (GlcNAc...) asparagine glycan. Thr-805 carries O-linked (GalNAc...) threonine glycosylation. A glycan (N-linked (GlcNAc...) asparagine) is linked at Asn-821. A compositionally biased stretch (polar residues) spans 822-831; sequence SSTAEHSSPY. The interval 822–842 is disordered; that stretch reads SSTAEHSSPYSEDPIEDPLQP. Ser-859 carries the post-translational modification Phosphoserine; by FAM20C. The segment at 894 to 927 is disordered; sequence LSQDTGSPSGMRPWEDLPSQDTGSPSRMRPWKDP. 2 repeat units span residues 895–911 and 912–928. The tract at residues 895–928 is 2 X 17 AA tandem repeats; the sequence is SQDTGSPSGMRPWEDLPSQDTGSPSRMRPWKDPP. Asn-938 and Asn-977 each carry an N-linked (GlcNAc...) asparagine glycan. Disordered regions lie at residues 982 to 1001 and 1029 to 1048; these read WGESTPLANKPGKQSGHPKF and TRKKKKEKHTHHAPLSPRTF. The span at 1029 to 1040 shows a compositional bias: basic residues; that stretch reads TRKKKKEKHTHH. 4 N-linked (GlcNAc...) asparagine glycosylation sites follow: Asn-1074, Asn-1083, Asn-1103, and Asn-1106. A disordered region spans residues 1097 to 1157; that stretch reads LPDHNQNSSN…SSSPELSEML (61 aa). Polar residues predominate over residues 1099–1111; that stretch reads DHNQNSSNDTGQA. Over residues 1139-1154 the composition is skewed to low complexity; it reads HSTSDPSHRSSSPELS. 35 repeat units span residues 1185 to 1193, 1194 to 1202, 1203 to 1211, 1212 to 1220, 1221 to 1229, 1230 to 1238, 1239 to 1247, 1248 to 1256, 1257 to 1265, 1266 to 1274, 1275 to 1283, 1284 to 1292, 1293 to 1301, 1302 to 1310, 1311 to 1319, 1320 to 1328, 1329 to 1337, 1338 to 1346, 1347 to 1355, 1356 to 1364, 1365 to 1373, 1374 to 1382, 1383 to 1391, 1392 to 1400, 1401 to 1409, 1410 to 1418, 1419 to 1427, 1428 to 1436, 1437 to 1445, 1446 to 1454, 1455 to 1463, 1464 to 1472, 1473 to 1481, 1482 to 1490, and 1493 to 1501. Residues 1185–1501 form a 35 X 9 AA approximate tandem repeats of [TNP]-L-S-P-D-L-S-Q-T region; sequence VISPDLSQVT…SPSSPTLNDT (317 aa). Residues 1341–1367 are disordered; the sequence is PELSQTNLSPALGQMPLSPDPSHTTLS. Asn-1479 is a glycosylation site (N-linked (GlcNAc...) asparagine). N-linked (GlcNAc...) asparagine glycosylation occurs at Asn-1499. A sulfotyrosine mark is found at Tyr-1522, Tyr-1538, and Tyr-1543. An N-linked (GlcNAc...) asparagine glycan is attached at Asn-1559. Plastocyanin-like domains follow at residues 1578–1751 and 1761–1907; these read NRRN…LLIC and NMPM…DRDC. An F5/8 type A 3 domain is found at 1578 to 1907; the sequence is NRRNYYIAAE…TPFLIMDRDC (330 aa). The residue at position 1593 (Tyr-1593) is a Sulfotyrosine. Asn-1703 carries N-linked (GlcNAc...) asparagine glycosylation. Cys-1725 and Cys-1751 are joined by a disulfide. Positions 1843 and 1845 each coordinate Cu cation. 2 disulfides stabilise this stretch: Cys-1907–Cys-2061 and Cys-2066–Cys-2221. F5/8 type C domains follow at residues 1907–2061 and 2066–2221; these read CRMP…LQGC and CSTP…LFGC. Residues Asn-2010 and Asn-2209 are each glycosylated (N-linked (GlcNAc...) asparagine).

This sequence belongs to the multicopper oxidase family. As to quaternary structure, factor Va, the activated form of factor V, is composed of a heavy chain and a light chain, non-covalently bound. The interaction between the two chains is calcium-dependent. Forms heterodimer with SERPINA5. Post-translationally, thrombin activates factor V proteolytically to the active cofactor, factor Va (formation of a heavy chain at the N-terminus and a light chain at the C-terminus). In terms of processing, sulfation is required for efficient thrombin cleavage and activation and for full procoagulant activity. Activated protein C inactivates factor V and factor Va by proteolytic degradation. Post-translationally, phosphorylated by FAM20C in the extracellular medium. In terms of tissue distribution, plasma.

The protein resides in the secreted. Its activity is regulated as follows. Inhibited by SERPINA5. Its function is as follows. Central regulator of hemostasis. It serves as a critical cofactor for the prothrombinase activity of factor Xa that results in the activation of prothrombin to thrombin. The protein is Coagulation factor V (F5) of Homo sapiens (Human).